A 987-amino-acid chain; its full sequence is Collagen alpha-1(I) chain (987 aa).

Pro residues predominate over residues Ser-1–Gly-21. The tract at residues Ser-1–Pro-987 is disordered. Pro-15, Pro-18, Pro-20, Pro-29, Pro-32, Pro-35, Pro-50, Pro-65, Pro-71, Pro-80, and Pro-86 each carry 4-hydroxyproline. A compositionally biased stretch (low complexity) spans Gln-23–Met-41. Residues Asn-53 to Glu-67 are compositionally biased toward basic and acidic residues. A 5-hydroxylysine; alternate modification is found at Lys-89. An O-linked (Gal...) hydroxylysine; alternate glycan is attached at Lys-89. Position 95 is a phosphoserine (Ser-95). Residues Asp-103–Asn-119 are compositionally biased toward low complexity. Pro-113, Pro-116, Pro-122, Pro-131, Pro-137, Pro-158, Pro-167, Pro-170, Pro-197, Pro-200, Pro-212, Pro-218, Pro-227, Pro-233, Pro-236, and Pro-251 each carry 4-hydroxyproline. A compositionally biased stretch (low complexity) spans Pro-137 to Ala-155. A compositionally biased stretch (pro residues) spans Pro-157–Phe-169. Residues Ala-203–Pro-253 are compositionally biased toward low complexity. Lys-254 carries the post-translational modification 5-hydroxylysine. Pro-260, Pro-263, Pro-275, Pro-284, Pro-299, Pro-305, Pro-314, and Pro-320 each carry 4-hydroxyproline. Gly residues predominate over residues Gly-309 to Gly-318. Residue Lys-329 is modified to 5-hydroxylysine. 24 positions are modified to 4-hydroxyproline: Pro-338, Pro-347, Pro-353, Pro-359, Pro-368, Pro-371, Pro-380, Pro-389, Pro-395, Pro-407, Pro-416, Pro-425, Pro-428, Pro-446, Pro-468, Pro-474, Pro-480, Pro-486, Pro-492, Pro-504, Pro-513, Pro-526, Pro-532, and Pro-541. A compositionally biased stretch (low complexity) spans Lys-362–Arg-388. Residues Ala-397 to Pro-416 show a composition bias toward low complexity. Residues Gln-458 to Gln-483 are compositionally biased toward low complexity. Lys-553 bears the 5-hydroxylysine mark. 4-hydroxyproline occurs at positions 559, 574, and 580. Over residues Ser-586 to Ala-600 the composition is skewed to low complexity. Ser-589 bears the Phosphoserine mark. A 4-hydroxyproline mark is found at Pro-601, Pro-607, Pro-610, Pro-619, Pro-625, Pro-643, Pro-652, and Pro-661. Over residues Ala-613–Ala-640 the composition is skewed to low complexity. Residues Pro-642–Pro-654 are compositionally biased toward pro residues. Lys-664 carries the post-translational modification 5-hydroxylysine. Over residues Ser-669 to Val-685 the composition is skewed to low complexity. 4-hydroxyproline occurs at positions 673 and 679. A 3-hydroxyproline modification is found at Pro-687. Residues Pro-688, Pro-697, Pro-700, Pro-721, Pro-730, Pro-738, Pro-747, Pro-765, Pro-774, Pro-777, Pro-783, Pro-798, Pro-804, Pro-810, Pro-819, and Pro-825 each carry the 4-hydroxyproline modification. Over residues Glu-714–Glu-723 the composition is skewed to low complexity. A compositionally biased stretch (low complexity) spans Lys-735–Pro-747. A compositionally biased stretch (pro residues) spans Pro-797–Ala-807. Over residues Pro-809–Ser-824 the composition is skewed to low complexity. Residue Lys-834 is modified to 5-hydroxylysine. Residues Ala-843 to Val-858 show a composition bias toward pro residues. Pro-846, Pro-849, and Pro-852 each carry 4-hydroxyproline. Residues Ala-879 to Pro-893 show a composition bias toward low complexity. The segment covering Arg-894–Asp-905 has biased composition (basic and acidic residues). Lys-897 is subject to 5-hydroxylysine. Pro-918, Pro-921, Pro-939, and Pro-954 each carry 4-hydroxyproline. Residues Pro-921–Pro-954 show a composition bias toward low complexity. The residue at position 959 (Pro-959) is a 3-hydroxyproline. The residue at position 960 (Pro-960) is a 4-hydroxyproline. The span at Val-972–Pro-987 shows a compositional bias: pro residues. Residue Pro-974 is modified to 3-hydroxyproline. Pro-975 is subject to 4-hydroxyproline. Pro-977 carries the 3-hydroxyproline modification. Pro-978 bears the 4-hydroxyproline mark. The residue at position 980 (Pro-980) is a 3-hydroxyproline. A 4-hydroxyproline mark is found at Pro-981, Pro-984, and Pro-987.

It belongs to the fibrillar collagen family. In terms of assembly, trimers of one alpha 2(I) and two alpha 1(I) chains. Contains mostly 4-hydroxyproline. Proline residues at the third position of the tripeptide repeating unit (G-X-Y) are hydroxylated in some or all of the chains. In terms of processing, contains 3-hydroxyproline at a few sites. This modification occurs on the first proline residue in the sequence motif Gly-Pro-Hyp, where Hyp is 4-hydroxyproline. Post-translationally, lysine residues at the third position of the tripeptide repeating unit (G-X-Y) are 5-hydroxylated in some or all of the chains. O-glycosylated on hydroxylated lysine residues. The O-linked glycan consists of a Glc-Gal disaccharide. As to expression, expressed in bones.

The protein resides in the secreted. The protein localises to the extracellular space. It is found in the extracellular matrix. Type I collagen is a member of group I collagen (fibrillar forming collagen). The sequence is that of Collagen alpha-1(I) chain from Glossotherium robustum (Ground sloth).